The sequence spans 397 residues: CCA-adding enzyme (397 aa).

2 residues coordinate ATP: Gly-27 and Arg-30. The CTP site is built by Gly-27 and Arg-30. Residues Asp-40 and Asp-42 each contribute to the Mg(2+) site. Arg-111, Asp-154, Arg-157, Arg-160, and Arg-163 together coordinate ATP. Positions 111, 154, 157, 160, and 163 each coordinate CTP.

Belongs to the tRNA nucleotidyltransferase/poly(A) polymerase family. Bacterial CCA-adding enzyme type 3 subfamily. Homodimer. Mg(2+) serves as cofactor.

It carries out the reaction a tRNA precursor + 2 CTP + ATP = a tRNA with a 3' CCA end + 3 diphosphate. The enzyme catalyses a tRNA with a 3' CCA end + 2 CTP + ATP = a tRNA with a 3' CCACCA end + 3 diphosphate. Catalyzes the addition and repair of the essential 3'-terminal CCA sequence in tRNAs without using a nucleic acid template. Adds these three nucleotides in the order of C, C, and A to the tRNA nucleotide-73, using CTP and ATP as substrates and producing inorganic pyrophosphate. tRNA 3'-terminal CCA addition is required both for tRNA processing and repair. Also involved in tRNA surveillance by mediating tandem CCA addition to generate a CCACCA at the 3' terminus of unstable tRNAs. While stable tRNAs receive only 3'-terminal CCA, unstable tRNAs are marked with CCACCA and rapidly degraded. This is CCA-adding enzyme from Anoxybacillus flavithermus (strain DSM 21510 / WK1).